The primary structure comprises 205 residues: Small ribosomal subunit protein uS4 (205 aa).

Residues 1 to 12 are compositionally biased toward basic residues; the sequence is MSKRVQAKHKLD. The interval 1–49 is disordered; sequence MSKRVQAKHKLDRRMGQNIWGRPKSPVNRREYGPGQHGQRRKGKMSDFG. The S4 RNA-binding domain occupies 94–155; that stretch reads RRLDAVVYRS…ASRQLEIVVV (62 aa).

The protein belongs to the universal ribosomal protein uS4 family. As to quaternary structure, part of the 30S ribosomal subunit. Contacts protein S5. The interaction surface between S4 and S5 is involved in control of translational fidelity.

Functionally, one of the primary rRNA binding proteins, it binds directly to 16S rRNA where it nucleates assembly of the body of the 30S subunit. In terms of biological role, with S5 and S12 plays an important role in translational accuracy. The polypeptide is Small ribosomal subunit protein uS4 (Methylorubrum populi (strain ATCC BAA-705 / NCIMB 13946 / BJ001) (Methylobacterium populi)).